A 208-amino-acid chain; its full sequence is Small ribosomal subunit protein uS4 (208 aa).

Residues 98-160 (RRLDNVVYRL…SKSKTRFVEI (63 aa)) enclose the S4 RNA-binding domain.

Belongs to the universal ribosomal protein uS4 family. In terms of assembly, part of the 30S ribosomal subunit. Contacts protein S5. The interaction surface between S4 and S5 is involved in control of translational fidelity.

Its function is as follows. One of the primary rRNA binding proteins, it binds directly to 16S rRNA where it nucleates assembly of the body of the 30S subunit. Functionally, with S5 and S12 plays an important role in translational accuracy. In Caldicellulosiruptor bescii (strain ATCC BAA-1888 / DSM 6725 / KCTC 15123 / Z-1320) (Anaerocellum thermophilum), this protein is Small ribosomal subunit protein uS4.